The sequence spans 216 residues: Large ribosomal subunit protein uL3 (216 aa).

Glutamine 157 bears the N5-methylglutamine mark.

It belongs to the universal ribosomal protein uL3 family. As to quaternary structure, part of the 50S ribosomal subunit. Forms a cluster with proteins L14 and L19. In terms of processing, methylated by PrmB.

Its function is as follows. One of the primary rRNA binding proteins, it binds directly near the 3'-end of the 23S rRNA, where it nucleates assembly of the 50S subunit. This is Large ribosomal subunit protein uL3 from Xanthomonas axonopodis pv. citri (strain 306).